The sequence spans 343 residues: Glyceraldehyde-3-phosphate dehydrogenase (343 aa).

NAD(+) contacts are provided by residues 13 to 14 (TI) and Gly111. 140–142 (SCN) serves as a coordination point for D-glyceraldehyde 3-phosphate. Catalysis depends on Cys141, which acts as the Nucleophile. Arg169 contributes to the NAD(+) binding site. 195–196 (HA) is a binding site for D-glyceraldehyde 3-phosphate. Gln303 provides a ligand contact to NAD(+).

The protein belongs to the glyceraldehyde-3-phosphate dehydrogenase family. In terms of assembly, homotetramer.

It localises to the cytoplasm. It carries out the reaction D-glyceraldehyde 3-phosphate + phosphate + NADP(+) = (2R)-3-phospho-glyceroyl phosphate + NADPH + H(+). It catalyses the reaction D-glyceraldehyde 3-phosphate + phosphate + NAD(+) = (2R)-3-phospho-glyceroyl phosphate + NADH + H(+). It participates in carbohydrate degradation; glycolysis; pyruvate from D-glyceraldehyde 3-phosphate: step 1/5. This is Glyceraldehyde-3-phosphate dehydrogenase from Sulfurisphaera tokodaii (strain DSM 16993 / JCM 10545 / NBRC 100140 / 7) (Sulfolobus tokodaii).